Here is a 347-residue protein sequence, read N- to C-terminus: GMP reductase (347 aa).

An NADP(+)-binding site is contributed by 108 to 131 (ADFQKTKDIMALTDDLIFICIDIA). Residues G181 and G183 each coordinate K(+). The active-site Thioimidate intermediate is C186. 216–239 (IIGDGGCSCAGDVSKAFGGGADFV) provides a ligand contact to NADP(+).

This sequence belongs to the IMPDH/GMPR family. GuaC type 1 subfamily. Homotetramer.

It carries out the reaction IMP + NH4(+) + NADP(+) = GMP + NADPH + 2 H(+). Catalyzes the irreversible NADPH-dependent deamination of GMP to IMP. It functions in the conversion of nucleobase, nucleoside and nucleotide derivatives of G to A nucleotides, and in maintaining the intracellular balance of A and G nucleotides. This chain is GMP reductase, found in Aliivibrio fischeri (strain ATCC 700601 / ES114) (Vibrio fischeri).